A 312-amino-acid polypeptide reads, in one-letter code: Ribonuclease HIII (312 aa).

The RNase H type-2 domain maps to 95 to 311 (FNCIGSDEAG…REKAQKILKP (217 aa)). Positions 101, 102, and 206 each coordinate a divalent metal cation.

It belongs to the RNase HII family. RnhC subfamily. It depends on Mn(2+) as a cofactor. Mg(2+) serves as cofactor.

Its subcellular location is the cytoplasm. The catalysed reaction is Endonucleolytic cleavage to 5'-phosphomonoester.. Its function is as follows. Endonuclease that specifically degrades the RNA of RNA-DNA hybrids. The protein is Ribonuclease HIII of Staphylococcus aureus (strain Mu3 / ATCC 700698).